The sequence spans 314 residues: Methionyl-tRNA formyltransferase (314 aa).

Residue 113-116 (SLLP) participates in (6S)-5,6,7,8-tetrahydrofolate binding.

The protein belongs to the Fmt family.

The enzyme catalyses L-methionyl-tRNA(fMet) + (6R)-10-formyltetrahydrofolate = N-formyl-L-methionyl-tRNA(fMet) + (6S)-5,6,7,8-tetrahydrofolate + H(+). Its function is as follows. Attaches a formyl group to the free amino group of methionyl-tRNA(fMet). The formyl group appears to play a dual role in the initiator identity of N-formylmethionyl-tRNA by promoting its recognition by IF2 and preventing the misappropriation of this tRNA by the elongation apparatus. This Pseudomonas aeruginosa (strain ATCC 15692 / DSM 22644 / CIP 104116 / JCM 14847 / LMG 12228 / 1C / PRS 101 / PAO1) protein is Methionyl-tRNA formyltransferase.